The sequence spans 446 residues: ATP synthase subunit b-delta (446 aa).

Residues 1–168 form an ATP synthase subunit b region; sequence MSTFIGQLFG…PATADVDYPL (168 aa). A helical transmembrane segment spans residues 4-24; sequence FIGQLFGFAVIVYLVWRFIVP. Residues 169 to 446 are ATP synthase subunit delta; sequence LAKMRSASRR…LAAAEARLPD (278 aa).

The protein in the N-terminal section; belongs to the ATPase B chain family. It in the C-terminal section; belongs to the ATPase delta chain family. In terms of assembly, F-type ATPases have 2 components, F(1) - the catalytic core - and F(0) - the membrane proton channel. F(1) has five subunits: alpha(3), beta(3), gamma(1), delta(1), epsilon(1). F(0) has three main subunits: a(1), b(2) and c(10-14). The alpha and beta chains form an alternating ring which encloses part of the gamma chain. F(1) is attached to F(0) by a central stalk formed by the gamma and epsilon chains, while a peripheral stalk is formed by the delta and b chains.

Its subcellular location is the cell membrane. Functionally, f(1)F(0) ATP synthase produces ATP from ADP in the presence of a proton or sodium gradient. F-type ATPases consist of two structural domains, F(1) containing the extramembraneous catalytic core and F(0) containing the membrane proton channel, linked together by a central stalk and a peripheral stalk. During catalysis, ATP synthesis in the catalytic domain of F(1) is coupled via a rotary mechanism of the central stalk subunits to proton translocation. In terms of biological role, this fusion protein includes a component of the F(0) channel (subunit b) and of the F(1) subunit (subunit delta). Two copies of subunit b and one of delta together form the peripheral 'stator' stalk which links F(1) to F(0). The sequence is that of ATP synthase subunit b-delta (atpFH) from Mycobacterium tuberculosis (strain CDC 1551 / Oshkosh).